Consider the following 266-residue polypeptide: 5'-nucleotidase SurE (266 aa).

Residues D8, D9, S39, and N93 each coordinate a divalent metal cation.

This sequence belongs to the SurE nucleotidase family. It depends on a divalent metal cation as a cofactor.

It localises to the cytoplasm. The catalysed reaction is a ribonucleoside 5'-phosphate + H2O = a ribonucleoside + phosphate. Nucleotidase that shows phosphatase activity on nucleoside 5'-monophosphates. The protein is 5'-nucleotidase SurE of Pyrobaculum arsenaticum (strain DSM 13514 / JCM 11321 / PZ6).